The primary structure comprises 300 residues: B3 domain-containing protein At5g57720 (300 aa).

The segment at residues 11 to 105 (PDFLKIFNSH…SFWVRIHRNG (95 aa)) is a DNA-binding region (TF-B3). Residues 115-142 (KIQEISDDEDETNGDGDPHMEEEGDTDE) form a disordered region. Over residues 119–129 (ISDDEDETNGD) the composition is skewed to acidic residues.

The protein resides in the nucleus. The protein is B3 domain-containing protein At5g57720 of Arabidopsis thaliana (Mouse-ear cress).